A 223-amino-acid polypeptide reads, in one-letter code: Ribose-5-phosphate isomerase A (223 aa).

Substrate-binding positions include 32–35 (TGST), 85–88 (DGAD), and 98–101 (KGGG). Glu107 (proton acceptor) is an active-site residue. Lys125 contributes to the substrate binding site.

This sequence belongs to the ribose 5-phosphate isomerase family. As to quaternary structure, homodimer.

It carries out the reaction aldehydo-D-ribose 5-phosphate = D-ribulose 5-phosphate. The protein operates within carbohydrate degradation; pentose phosphate pathway; D-ribose 5-phosphate from D-ribulose 5-phosphate (non-oxidative stage): step 1/1. Functionally, catalyzes the reversible conversion of ribose-5-phosphate to ribulose 5-phosphate. The protein is Ribose-5-phosphate isomerase A of Pseudomonas syringae pv. syringae (strain B728a).